A 437-amino-acid chain; its full sequence is Beta-1,3-galactosyl-O-glycosyl-glycoprotein beta-1,6-N-acetylglucosaminyltransferase 3 (437 aa).

Topologically, residues 1–6 (MVSWRR) are cytoplasmic. A helical; Signal-anchor for type II membrane protein membrane pass occupies residues 7 to 27 (FCWHYHGWTLGCYMLLAIIAL). Topologically, residues 28-437 (KLSLRLKCDF…RHKAIYGTEL (410 aa)) are lumenal. Intrachain disulfides connect Cys-70–Cys-227, Cys-161–Cys-381, Cys-182–Cys-209, and Cys-390–Cys-422. Asn-288 carries N-linked (GlcNAc...) asparagine glycosylation.

The protein belongs to the glycosyltransferase 14 family. In terms of processing, N-glycosylated.

The protein localises to the golgi apparatus membrane. It catalyses the reaction a 3-O-[beta-D-galactosyl-(1-&gt;3)-N-acetyl-alpha-D-galactosaminyl]-L-seryl-[protein] + UDP-N-acetyl-alpha-D-glucosamine = 3-O-{beta-D-galactosyl-(1-&gt;3)-[N-acetyl-beta-D-glucosaminyl-(1-&gt;6)]-N-acetyl-alpha-D-galactosaminyl}-L-seryl-[protein] + UDP + H(+). The catalysed reaction is a 3-O-[beta-D-galactosyl-(1-&gt;3)-N-acetyl-alpha-D-galactosaminyl]-L-threonyl-[protein] + UDP-N-acetyl-alpha-D-glucosamine = a 3-O-{beta-D-galactosyl-(1-&gt;3)-[N-acetyl-beta-D-glucosaminyl-(1-&gt;6)]-N-acetyl-alpha-D-galactosaminyl}-L-threonyl-[protein] + UDP + H(+). The enzyme catalyses a beta-D-Gal-(1-&gt;4)-beta-D-GlcNAc-(1-&gt;3)-beta-D-Gal-(1-&gt;4)-beta-D-GlcNAc derivative + UDP-N-acetyl-alpha-D-glucosamine = a beta-D-Gal-(1-&gt;4)-beta-D-GlcNAc-(1-&gt;3)-[beta-D-GlcNAc-(1-&gt;6)]-beta-D-Gal-(1-&gt;4)-N-acetyl-beta-D-glucosaminyl derivative + UDP + H(+). It carries out the reaction 3-O-[N-acetyl-beta-D-glucosaminyl-(1-&gt;3)-N-acetyl-alpha-D-galactosaminyl]-L-seryl-[protein] + UDP-N-acetyl-alpha-D-glucosamine = 3-O-[N-acetyl-beta-D-glucosaminyl-(1-&gt;3)-[N-acetyl-beta-D-glucosaminyl-(1-&gt;6)]-N-acetyl-alpha-D-galactosaminyl]-L-seryl-[protein] + UDP + H(+). It catalyses the reaction a 3-O-[N-acetyl-beta-D-glucosaminyl-(1-&gt;3)-N-acetyl-alpha-D-galactosaminyl]-L-threonyl-[protein] + UDP-N-acetyl-alpha-D-glucosamine = 3-O-[N-acetyl-beta-D-glucosaminyl-(1-&gt;3)-[N-acetyl-beta-D-glucosaminyl-(1-&gt;6)]-N-acetyl-alpha-D-galactosaminyl]-L-threonyl-[protein] + UDP + H(+). It functions in the pathway protein modification; protein glycosylation. Functionally, glycosyltransferase that can synthesize all known mucin beta 6 N-acetylglucosaminides. Mediates core 2 and core 4 O-glycan branching, 2 important steps in mucin-type biosynthesis. Also has I-branching enzyme activity by converting linear into branched poly-N-acetyllactosaminoglycans, leading to introduce the blood group I antigen during embryonic development. In Rattus norvegicus (Rat), this protein is Beta-1,3-galactosyl-O-glycosyl-glycoprotein beta-1,6-N-acetylglucosaminyltransferase 3 (Gcnt3).